The sequence spans 207 residues: Large ribosomal subunit protein bL20 (207 aa).

Residues 117 to 161 are disordered; the sequence is QETQPQPEEKTSLQPEKVLSTELSEEKSDDTLETKPQTTQVKAKK. Residues 140-149 are compositionally biased toward basic and acidic residues; sequence SEEKSDDTLE.

Belongs to the bacterial ribosomal protein bL20 family.

Its function is as follows. Binds directly to 23S ribosomal RNA and is necessary for the in vitro assembly process of the 50S ribosomal subunit. It is not involved in the protein synthesizing functions of that subunit. This Onion yellows phytoplasma (strain OY-M) protein is Large ribosomal subunit protein bL20.